A 389-amino-acid chain; its full sequence is MDLFEYQAKELFAKHEVPTSAGRVTDTVAGAREIAEEIGKPVMVKAQVKVGGRGKAGGVKYSADVDAAQANAEAILGLDIKGHVVKKLLVAEASDIAEEYYISFLLDRTNRTYLAMCSVEGGVEIEVTAEENPDALAKIPVDAVKGVDLAFARSIAEAGKLPAEVLDAAAVTIQKLWEVFIKEDALLVEVNPLVRTPNDEILALDGKVTLDENAAFRQPGHEAFEDKDATDPLELKAKENDLNYVKLDGEVGIIGNGAGLVMSTLDVVAYAGEKHGGVKPANFLDIGGGASAEVMANGLDVILNDAQVKSVFVNVFGGITACDAVANGIVGALKTLGDEANKPLVVRLDGNNVEEGRRILAEAAHPLVTVVGTMDEAADKAAELAFAAK.

The 228-residue stretch at Lys-9–Lys-236 folds into the ATP-grasp domain. ATP-binding positions include Lys-45, Gly-52–Gly-54, Ser-94, and Glu-99. Mg(2+)-binding residues include Asn-191 and Asp-205. Residues Asn-256 and Gly-318–Thr-320 contribute to the substrate site.

It belongs to the succinate/malate CoA ligase beta subunit family. As to quaternary structure, heterotetramer of two alpha and two beta subunits. Requires Mg(2+) as cofactor.

It carries out the reaction succinate + ATP + CoA = succinyl-CoA + ADP + phosphate. It catalyses the reaction GTP + succinate + CoA = succinyl-CoA + GDP + phosphate. It functions in the pathway carbohydrate metabolism; tricarboxylic acid cycle; succinate from succinyl-CoA (ligase route): step 1/1. In terms of biological role, succinyl-CoA synthetase functions in the citric acid cycle (TCA), coupling the hydrolysis of succinyl-CoA to the synthesis of either ATP or GTP and thus represents the only step of substrate-level phosphorylation in the TCA. The beta subunit provides nucleotide specificity of the enzyme and binds the substrate succinate, while the binding sites for coenzyme A and phosphate are found in the alpha subunit. In Rhodococcus opacus (strain B4), this protein is Succinate--CoA ligase [ADP-forming] subunit beta.